The primary structure comprises 915 residues: Nitrate reductase [NADH] (915 aa).

Positions 1 to 102 (MAASVEPRQP…PRDEGTADAW (102 aa)) are disordered. Residues 16–26 (APATAPTARAP) are compositionally biased toward low complexity. Positions 57–71 (AEEEEDDDDEDDEGH) are enriched in acidic residues. Residues 88-97 (PSTRDPRDEG) show a composition bias toward basic and acidic residues. Cys-189 serves as a coordination point for Mo-molybdopterin. In terms of domain architecture, Cytochrome b5 heme-binding spans 538 to 613 (DKQFTMSEVR…LDTYRIGELI (76 aa)). Heme is bound by residues His-573 and His-596. Positions 654-767 (REKVPCRLVD…KGPLGHVEYT (114 aa)) constitute an FAD-binding FR-type domain. Residues 706-709 (RAYT), 723-727 (LVKVY), Phe-728, Phe-735, 740-742 (LMT), Ser-791, and Thr-794 each bind FAD.

The protein belongs to the nitrate reductase family. Homodimer. Requires FAD as cofactor. Heme is required as a cofactor. It depends on Mo-molybdopterin as a cofactor.

It carries out the reaction nitrite + NAD(+) + H2O = nitrate + NADH + H(+). Nitrate reductase is a key enzyme involved in the first step of nitrate assimilation in plants, fungi and bacteria. In Hordeum vulgare (Barley), this protein is Nitrate reductase [NADH].